A 153-amino-acid chain; its full sequence is Ribosome maturation factor RimP (153 aa).

Belongs to the RimP family.

Its subcellular location is the cytoplasm. Required for maturation of 30S ribosomal subunits. The sequence is that of Ribosome maturation factor RimP from Coxiella burnetii (strain CbuG_Q212) (Coxiella burnetii (strain Q212)).